We begin with the raw amino-acid sequence, 155 residues long: Ribosomal RNA large subunit methyltransferase H (155 aa).

S-adenosyl-L-methionine is bound by residues L72, G103, and 122 to 127 (LSPLTL).

It belongs to the RNA methyltransferase RlmH family. As to quaternary structure, homodimer.

The protein localises to the cytoplasm. It catalyses the reaction pseudouridine(1915) in 23S rRNA + S-adenosyl-L-methionine = N(3)-methylpseudouridine(1915) in 23S rRNA + S-adenosyl-L-homocysteine + H(+). In terms of biological role, specifically methylates the pseudouridine at position 1915 (m3Psi1915) in 23S rRNA. The polypeptide is Ribosomal RNA large subunit methyltransferase H (Haemophilus ducreyi (strain 35000HP / ATCC 700724)).